Here is a 212-residue protein sequence, read N- to C-terminus: Thiamine-phosphate synthase (212 aa).

4-amino-2-methyl-5-(diphosphooxymethyl)pyrimidine-binding positions include 39-41 and N71; that span reads QLR. Positions 72 and 91 each coordinate Mg(2+). S110 contributes to the 4-amino-2-methyl-5-(diphosphooxymethyl)pyrimidine binding site. Residue 136–138 participates in 2-[(2R,5Z)-2-carboxy-4-methylthiazol-5(2H)-ylidene]ethyl phosphate binding; that stretch reads TGT. K139 serves as a coordination point for 4-amino-2-methyl-5-(diphosphooxymethyl)pyrimidine. Residues G167 and 187–188 contribute to the 2-[(2R,5Z)-2-carboxy-4-methylthiazol-5(2H)-ylidene]ethyl phosphate site; that span reads VS.

The protein belongs to the thiamine-phosphate synthase family. Mg(2+) is required as a cofactor.

It catalyses the reaction 2-[(2R,5Z)-2-carboxy-4-methylthiazol-5(2H)-ylidene]ethyl phosphate + 4-amino-2-methyl-5-(diphosphooxymethyl)pyrimidine + 2 H(+) = thiamine phosphate + CO2 + diphosphate. The catalysed reaction is 2-(2-carboxy-4-methylthiazol-5-yl)ethyl phosphate + 4-amino-2-methyl-5-(diphosphooxymethyl)pyrimidine + 2 H(+) = thiamine phosphate + CO2 + diphosphate. The enzyme catalyses 4-methyl-5-(2-phosphooxyethyl)-thiazole + 4-amino-2-methyl-5-(diphosphooxymethyl)pyrimidine + H(+) = thiamine phosphate + diphosphate. It functions in the pathway cofactor biosynthesis; thiamine diphosphate biosynthesis; thiamine phosphate from 4-amino-2-methyl-5-diphosphomethylpyrimidine and 4-methyl-5-(2-phosphoethyl)-thiazole: step 1/1. Condenses 4-methyl-5-(beta-hydroxyethyl)thiazole monophosphate (THZ-P) and 2-methyl-4-amino-5-hydroxymethyl pyrimidine pyrophosphate (HMP-PP) to form thiamine monophosphate (TMP). The sequence is that of Thiamine-phosphate synthase from Azorhizobium caulinodans (strain ATCC 43989 / DSM 5975 / JCM 20966 / LMG 6465 / NBRC 14845 / NCIMB 13405 / ORS 571).